Here is a 413-residue protein sequence, read N- to C-terminus: Serine/threonine transporter SstT (413 aa).

9 helical membrane passes run 11–31 (IANGSLVLQIISGIILGVILA), 43–63 (FLGSLFVGALKAIAPILVFVL), 82–102 (IIGLYLLGTFVAALTAVLFSF), 141–161 (ALLTGNYIGILVWGAGLGITM), 192–212 (IGIFGLVAATFAETGFDALAG), 216–236 (LLMVLVGSMLFIALVINPIIV), 298–318 (MGGAAITITVLTLAAAHTLGI), 339–359 (ASGVAGGSLLLIPLACSLFGI), and 363–383 (VAMQVVAVGFIIGVIQDSAET).

It belongs to the dicarboxylate/amino acid:cation symporter (DAACS) (TC 2.A.23) family.

The protein resides in the cell inner membrane. It catalyses the reaction L-serine(in) + Na(+)(in) = L-serine(out) + Na(+)(out). The enzyme catalyses L-threonine(in) + Na(+)(in) = L-threonine(out) + Na(+)(out). In terms of biological role, involved in the import of serine and threonine into the cell, with the concomitant import of sodium (symport system). This chain is Serine/threonine transporter SstT, found in Shewanella frigidimarina (strain NCIMB 400).